Reading from the N-terminus, the 771-residue chain is GPI mannosyltransferase 3 (771 aa).

The tract at residues 1-47 (MSSSRRRKSFTSSSSSSSPSFHSPPPTSRLRPRSPPSSNTKTSPTST) is disordered. Low complexity-rich tracts occupy residues 10–21 (FTSSSSSSSPSF) and 36–47 (PSSNTKTSPTST). The next 7 helical transmembrane spans lie at 49–69 (PLAT…AFTV), 251–271 (LSLA…WMGL), 285–305 (AILV…SCVV), 341–361 (YVSQ…LVGL), 378–398 (SLVQ…LSLV), 410–430 (LPSL…PAVI), and 441–461 (LTLI…TIYH). A disordered region spans residues 575–594 (SYLSAQPRPQHPSTTSTNDA).

Belongs to the glycosyltransferase 22 family. PIGB subfamily.

It localises to the endoplasmic reticulum membrane. It functions in the pathway glycolipid biosynthesis; glycosylphosphatidylinositol-anchor biosynthesis. Its function is as follows. Mannosyltransferase involved in glycosylphosphatidylinositol-anchor biosynthesis. Transfers the third mannose to Man2-GlcN-acyl-PI during GPI precursor assembly. The sequence is that of GPI mannosyltransferase 3 (gpi10) from Aspergillus fumigatus (strain ATCC MYA-4609 / CBS 101355 / FGSC A1100 / Af293) (Neosartorya fumigata).